Here is a 453-residue protein sequence, read N- to C-terminus: Glutamate--tRNA ligase 2 (453 aa).

The 'HIGH' region motif lies at 10-20 (PSPTGFLHIGG). Residues 232-236 (KLSKR) carry the 'KMSKS' region motif. An ATP-binding site is contributed by K235.

The protein belongs to the class-I aminoacyl-tRNA synthetase family. Glutamate--tRNA ligase type 1 subfamily. As to quaternary structure, monomer.

It localises to the cytoplasm. It carries out the reaction tRNA(Glu) + L-glutamate + ATP = L-glutamyl-tRNA(Glu) + AMP + diphosphate. In terms of biological role, catalyzes the attachment of glutamate to tRNA(Glu) in a two-step reaction: glutamate is first activated by ATP to form Glu-AMP and then transferred to the acceptor end of tRNA(Glu). This Wolbachia sp. subsp. Brugia malayi (strain TRS) protein is Glutamate--tRNA ligase 2.